The primary structure comprises 314 residues: Mitochondrial translation factor 2 (314 aa).

Residues 111 to 136 are disordered; sequence ENSSNIYDPSSPPDSPRKQQTHLGTI.

Component of the MRH5C complex, composed of mrh5, ppr4, mtf2, and sls1. Proteins mtf2 and sls1 form a subcomplex that serves as a scaffold to bring mrh5 and ppr4 together. The MRH5C complex associates with the small subunit of the mitochondrial ribosome.

Functionally, translation activation factor that as part of the MRH5C complex specifically recruits cox1 mRNA to the mitochondrial ribosome for translation initiation. The sequence is that of Mitochondrial translation factor 2 from Schizosaccharomyces pombe (strain 972 / ATCC 24843) (Fission yeast).